The sequence spans 355 residues: Putative transport protein PH1000 (355 aa).

Helical transmembrane passes span 34-54, 55-75, 84-104, 158-178, 212-232, 240-260, 274-294, and 310-330; these read VTWI…LPFF, SPLF…IKLK, AILL…ILVY, FSVP…YFFL, VWLL…LIFK, ILAG…GWMI, IIAG…LPDF, and VLVL…GLII.

This sequence belongs to the autoinducer-2 exporter (AI-2E) (TC 2.A.86) family.

It is found in the cell membrane. In Pyrococcus horikoshii (strain ATCC 700860 / DSM 12428 / JCM 9974 / NBRC 100139 / OT-3), this protein is Putative transport protein PH1000.